The chain runs to 212 residues: Pyrrolidone-carboxylate peptidase (212 aa).

Residues Glu78, Cys141, and His165 contribute to the active site.

Belongs to the peptidase C15 family. As to quaternary structure, homotetramer.

It localises to the cytoplasm. It carries out the reaction Release of an N-terminal pyroglutamyl group from a polypeptide, the second amino acid generally not being Pro.. In terms of biological role, removes 5-oxoproline from various penultimate amino acid residues except L-proline. This is Pyrrolidone-carboxylate peptidase from Staphylococcus haemolyticus (strain JCSC1435).